Reading from the N-terminus, the 134-residue chain is L-ectoine synthase (134 aa).

Belongs to the ectoine synthase family.

It carries out the reaction (2S)-4-acetamido-2-aminobutanoate = L-ectoine + H2O. It participates in amine and polyamine biosynthesis; ectoine biosynthesis; L-ectoine from L-aspartate 4-semialdehyde: step 3/3. Functionally, catalyzes the circularization of gamma-N-acetyl-alpha,gamma-diaminobutyric acid (ADABA) to ectoine (1,4,5,6-tetrahydro-2-methyl-4-pyrimidine carboxylic acid), which is an excellent osmoprotectant. The polypeptide is L-ectoine synthase (Thermobifida fusca (strain YX)).